A 111-amino-acid polypeptide reads, in one-letter code: UPF0375 protein ule-4 (111 aa).

The first 18 residues, 1–18, serve as a signal peptide directing secretion; that stretch reads MNSRLVLLLAVSVALVSA. 2 N-linked (GlcNAc...) asparagine glycosylation sites follow: asparagine 23 and asparagine 58.

It belongs to the UPF0375 family.

It is found in the secreted. This Caenorhabditis elegans protein is UPF0375 protein ule-4.